The chain runs to 236 residues: 2-C-methyl-D-erythritol 4-phosphate cytidylyltransferase (236 aa).

Belongs to the IspD/TarI cytidylyltransferase family. IspD subfamily.

It catalyses the reaction 2-C-methyl-D-erythritol 4-phosphate + CTP + H(+) = 4-CDP-2-C-methyl-D-erythritol + diphosphate. It participates in isoprenoid biosynthesis; isopentenyl diphosphate biosynthesis via DXP pathway; isopentenyl diphosphate from 1-deoxy-D-xylulose 5-phosphate: step 2/6. Catalyzes the formation of 4-diphosphocytidyl-2-C-methyl-D-erythritol from CTP and 2-C-methyl-D-erythritol 4-phosphate (MEP). This Paraburkholderia phymatum (strain DSM 17167 / CIP 108236 / LMG 21445 / STM815) (Burkholderia phymatum) protein is 2-C-methyl-D-erythritol 4-phosphate cytidylyltransferase.